The chain runs to 261 residues: Global transcriptional regulator CodY (261 aa).

The GAF domain stretch occupies residues methionine 1–leucine 159. Positions alanine 207–arginine 226 form a DNA-binding region, H-T-H motif.

Belongs to the CodY family.

It is found in the cytoplasm. Functionally, DNA-binding global transcriptional regulator which is involved in the adaptive response to starvation and acts by directly or indirectly controlling the expression of numerous genes in response to nutrient availability. During rapid exponential growth, CodY is highly active and represses genes whose products allow adaptation to nutrient depletion. This is Global transcriptional regulator CodY from Streptococcus agalactiae serotype Ia (strain ATCC 27591 / A909 / CDC SS700).